A 1531-amino-acid polypeptide reads, in one-letter code: DNA topoisomerase 2-alpha (1531 aa).

Met1 is subject to N-acetylmethionine. Ser4 is modified (phosphoserine). Lys17 participates in a covalent cross-link: Glycyl lysine isopeptide (Lys-Gly) (interchain with G-Cter in SUMO2). ATP is bound by residues Asn91, Asn120, and Ser148–Asn150. Residues Lys156 and Lys157 each participate in a glycyl lysine isopeptide (Lys-Gly) (interchain with G-Cter in SUMO2) cross-link. Gly161–Lys168 provides a ligand contact to ATP. A Glycyl lysine isopeptide (Lys-Gly) (interchain with G-Cter in SUMO2) cross-link involves residue Lys261. The residue at position 282 (Thr282) is a Phosphothreonine. The interval Lys342 to Lys344 is interaction with DNA. A Glycyl lysine isopeptide (Lys-Gly) (interchain with G-Cter in SUMO2) cross-link involves residue Lys352. Gln376–Lys378 is an ATP binding site. Residues Lys386, Lys397, Lys416, Lys418, Lys425, and Lys440 each participate in a glycyl lysine isopeptide (Lys-Gly) (interchain with G-Cter in SUMO2) cross-link. The 118-residue stretch at Cys455–Glu572 folds into the Toprim domain. Residue Glu461 participates in Mg(2+) binding. Residues Lys466, Lys480, and Lys529 each participate in a glycyl lysine isopeptide (Lys-Gly) (interchain with G-Cter in SUMO2) cross-link. Positions 541 and 543 each coordinate Mg(2+). Residues Lys584, Lys599, Lys614, Lys622, Lys625, Lys632, Lys639, Lys655, Lys662, and Lys676 each participate in a glycyl lysine isopeptide (Lys-Gly) (interchain with G-Cter in SUMO2) cross-link. Residues Ile715 to Leu1171 enclose the Topo IIA-type catalytic domain. Tyr805 acts as the O-(5'-phospho-DNA)-tyrosine intermediate in catalysis. Residues Lys990–Ser999 form an interaction with DNA region. The short motif at Ile1018 to Lys1028 is the Nuclear export signal element. Lys1075 is covalently cross-linked (Glycyl lysine isopeptide (Lys-Gly) (interchain with G-Cter in SUMO2)). Disordered regions lie at residues Trp1090 to Pro1123 and Lys1184 to Phe1531. Residues Asp1099–Asn1108 are compositionally biased toward acidic residues. The residue at position 1106 (Ser1106) is a Phosphoserine; by CK1. Glycyl lysine isopeptide (Lys-Gly) (interchain with G-Cter in SUMO2) cross-links involve residues Lys1114, Lys1196, and Lys1204. Position 1205 is a phosphothreonine (Thr1205). A Phosphoserine modification is found at Ser1213. Lys1228 participates in a covalent cross-link: Glycyl lysine isopeptide (Lys-Gly) (interchain with G-Cter in SUMO2). Residue Lys1240 forms a Glycyl lysine isopeptide (Lys-Gly) (interchain with G-Cter in SUMO1); alternate linkage. Lys1240 participates in a covalent cross-link: Glycyl lysine isopeptide (Lys-Gly) (interchain with G-Cter in SUMO2); alternate. A Phosphothreonine modification is found at Thr1244. Ser1247 is modified (phosphoserine). Residues Glu1256–Thr1272 show a composition bias toward basic and acidic residues. Glycyl lysine isopeptide (Lys-Gly) (interchain with G-Cter in SUMO2) cross-links involve residues Lys1259, Lys1276, Lys1283, and Lys1286. Ser1295, Ser1297, Ser1299, and Ser1302 each carry phosphoserine. At Thr1327 the chain carries Phosphothreonine. Residues Leu1330–Val1349 show a composition bias toward acidic residues. Residues Ser1332 and Ser1337 each carry the phosphoserine modification. At Thr1343 the chain carries Phosphothreonine; by PLK3. 2 positions are modified to phosphoserine: Ser1351 and Ser1354. Glycyl lysine isopeptide (Lys-Gly) (interchain with G-Cter in SUMO2) cross-links involve residues Lys1363, Lys1367, and Lys1373. 2 positions are modified to phosphoserine: Ser1374 and Ser1377. Residue Lys1385 forms a Glycyl lysine isopeptide (Lys-Gly) (interchain with G-Cter in SUMO2) linkage. Ser1387, Ser1391, Ser1392, and Ser1393 each carry phosphoserine. Positions Thr1406 to Gly1431 are enriched in low complexity. Lys1422 participates in a covalent cross-link: Glycyl lysine isopeptide (Lys-Gly) (interchain with G-Cter in SUMO2); alternate. Position 1422 is an N6-acetyllysine; alternate (Lys1422). The interaction with PLSCR1 stretch occupies residues Lys1433 to Lys1439. Residue Lys1442 forms a Glycyl lysine isopeptide (Lys-Gly) (interchain with G-Cter in SUMO2); alternate linkage. N6-acetyllysine; alternate is present on Lys1442. Ser1449 carries the phosphoserine modification. Residues Lys1454 and Lys1459 each participate in a glycyl lysine isopeptide (Lys-Gly) (interchain with G-Cter in SUMO2) cross-link. Ser1469 carries the post-translational modification Phosphoserine; by CK2. Thr1470 is subject to Phosphothreonine. Ser1471, Ser1474, and Ser1476 each carry phosphoserine. Residues Lys1484 and Lys1492 each participate in a glycyl lysine isopeptide (Lys-Gly) (interchain with G-Cter in SUMO2) cross-link. The segment covering Ser1491–Phe1502 has biased composition (basic and acidic residues). Phosphoserine is present on residues Ser1495, Ser1504, and Ser1525.

The protein belongs to the type II topoisomerase family. In terms of assembly, homodimer. Interacts with COPS5. Interacts with RECQL5; this stimulates DNA decatenation. Interacts with SETMAR; stimulates the topoisomerase activity. Interacts with DHX9; this interaction occurs in a E2 enzyme UBE2I- and RNA-dependent manner, negatively regulates DHX9-mediated double-stranded DNA and RNA duplex helicase activity and stimulates TOP2A-mediated supercoiled DNA relaxation activity. Interacts with HNRNPU (via C-terminus); this interaction protects the topoisomerase TOP2A from degradation and positively regulates the relaxation of supercoiled DNA in a RNA-dependent manner. Interacts with MCM3AP isoform GANP. Interacts with ERCC6. Interacts with PLSCR1. Interacts with GCNA; this interaction allows the resolution of topoisomerase II (TOP2A) DNA-protein cross-links. Interacts with POL1RA/RPA1 (via dock II) and UBTF in the context of Pol I complex; may assist Pol I transcription initiation by releasing supercoils occurring during DNA unwinding. Interacts with TPRN; TPRN interacts with a number of DNA damage response proteins, is recruited to sites of DNA damage and may play a role in DNA damage repair. Mg(2+) serves as cofactor. Requires Mn(2+) as cofactor. Ca(2+) is required as a cofactor. Post-translationally, phosphorylation has no effect on catalytic activity. However, phosphorylation at Ser-1106 by CSNK1D/CK1 promotes DNA cleavable complex formation. (Microbial infection) Deubiquitinated by Epstein-Barr virus BPLF1; leading to stabilized SUMOylated TOP2A trapped in cleavage complexes, which halts the DNA damage response to TOP2A-induced double-strand DNA breaks. In terms of processing, SUMOylated. As to expression, expressed in the tonsil, spleen, lymph node, thymus, skin, pancreas, testis, colon, kidney, liver, brain and lung. Also found in high-grade lymphomas, squamous cell lung tumors and seminomas.

Its subcellular location is the cytoplasm. It is found in the nucleus. The protein localises to the nucleoplasm. The protein resides in the nucleolus. The enzyme catalyses ATP-dependent breakage, passage and rejoining of double-stranded DNA.. Its activity is regulated as follows. Specifically inhibited by the intercalating agent amsacrine. Functionally, key decatenating enzyme that alters DNA topology by binding to two double-stranded DNA molecules, generating a double-stranded break in one of the strands, passing the intact strand through the broken strand, and religating the broken strand. May play a role in regulating the period length of BMAL1 transcriptional oscillation. The polypeptide is DNA topoisomerase 2-alpha (TOP2A) (Homo sapiens (Human)).